Here is a 301-residue protein sequence, read N- to C-terminus: Averufin oxidase A (301 aa).

The signal sequence occupies residues 1-23; sequence MPTYALLGATGATGSAILRCLLA. 3 N-linked (GlcNAc...) asparagine glycosylation sites follow: Asn62, Asn86, and Asn190.

The protein belongs to the avfA family.

It participates in mycotoxin biosynthesis. Functionally, averufin oxidase A; part of the fragmented gene cluster that mediates the biosynthesis of dothistromin (DOTH), a polyketide toxin very similar in structure to the aflatoxin precursor, versicolorin B. The first step of the pathway is the conversion of acetate to norsolorinic acid (NOR) and requires the fatty acid synthase subunits hexA and hexB, as well as the polyketide synthase pksA. PksA combines a hexanoyl starter unit and 7 malonyl-CoA extender units to synthesize the precursor NOR. The hexanoyl starter unit is provided to the acyl-carrier protein (ACP) domain by the fungal fatty acid synthase hexA/hexB. The second step is the conversion of NOR to averantin (AVN) and requires the norsolorinic acid ketoreductase nor1, which catalyzes the dehydration of norsolorinic acid to form (1'S)-averantin. The cytochrome P450 monooxygenase avnA then catalyzes the hydroxylation of AVN to 5'hydroxyaverantin (HAVN). The next step is performed by adhA that transforms HAVN to averufin (AVF). Averufin might then be converted to hydroxyversicolorone by cypX and avfA. Hydroxyversicolorone is further converted versiconal hemiacetal acetate (VHA) by moxY. VHA is then the substrate for the versiconal hemiacetal acetate esterase est1 to yield versiconal (VAL). Versicolorin B synthase vbsA then converts VAL to versicolorin B (VERB) by closing the bisfuran ring. Then, the activity of the versicolorin B desaturase verB leads to versicolorin A (VERA). DotB, a predicted chloroperoxidase, may perform epoxidation of the A-ring of VERA. Alternatively, a cytochrome P450, such as cypX or avnA could catalyze this step. It is also possible that another, uncharacterized, cytochrome P450 enzyme is responsible for this step. Opening of the epoxide could potentially be achieved by the epoxide hydrolase epoA. However, epoA seems not to be required for DOTH biosynthesis, but other epoxide hydrolases may have the ability to complement this hydrolysis. Alternatively, opening of the epoxide ring could be achieved non-enzymatically. The next step is the deoxygenation of ring A to yield the 5,8-dihydroxyanthraquinone which is most likely catalyzed by the NADPH dehydrogenase encoded by ver1. The last stages of DOTH biosynthesis are proposed to involve hydroxylation of the bisfuran. OrdB and norB might have oxidative roles here. An alternative possibility is that cytochrome P450 monoogenases such as avnA and cypX might perform these steps in addition to previously proposed steps. The chain is Averufin oxidase A from Dothistroma septosporum (Red band needle blight fungus).